Reading from the N-terminus, the 144-residue chain is RxLR effector protein PITG_03192 (144 aa).

The signal sequence occupies residues 1-24; sequence MRVGFVFALLVVSVIVCFNGLTSA. The short motif at 49–58 is the RxLR-dEER element; sequence RNLRASGEER. An N-linked (GlcNAc...) asparagine glycan is attached at Asn-115. Residues 122–142 traverse the membrane as a helical segment; the sequence is FFILATLVMFPIGVWAVVTNY.

It belongs to the RxLR effector family. In terms of assembly, interacts with the C-terminal portions the ER-associated potato NAC transcription factors NTP1 and NTP2.

The protein resides in the secreted. The protein localises to the host endoplasmic reticulum membrane. In terms of biological role, effector that is required for full virulence. Targets host NTP1 and NTP2 transcription factors and prevents their pathogen-associated molecular pattern (PAMP)-triggered re-localization from the endoplasmic reticulum into the nucleus, where they contribute to prevent disease progression by P.infestans. The protein is RxLR effector protein PITG_03192 of Phytophthora infestans (strain T30-4) (Potato late blight agent).